The chain runs to 327 residues: rRNA 2'-O-methyltransferase fibrillarin (327 aa).

Positions 1 to 96 (MGTDYRNSGR…GFKGGAKTMV (96 aa)) are disordered. An asymmetric dimethylarginine mark is found at R10, R19, R44, R49, R55, R65, R69, and R78. Residues 22–56 (GNDRRDSGRSFGDRRPERPDFKRGDGGRGFGDRRG) show a composition bias toward basic and acidic residues. Residues 73 to 90 (DGPGGRGGPGGPGGGFKG) are compositionally biased toward gly residues. S-adenosyl-L-methionine-binding positions include 181 to 182 (TT), 200 to 201 (EF), 225 to 226 (DA), and 245 to 248 (DVAQ).

The protein belongs to the methyltransferase superfamily. Fibrillarin family. In terms of assembly, component of box C/D small nucleolar ribonucleoprotein (snoRNP) particles. It is associated with the U3, U8 and U13 small nuclear RNAs. By homology to other fibrillarins, some or all of the N-terminal domain arginines are modified to asymmetric dimethylarginine (DMA).

Its subcellular location is the nucleus. It localises to the nucleolus. It carries out the reaction L-glutaminyl-[histone H2A] + S-adenosyl-L-methionine = N(5)-methyl-L-glutaminyl-[histone H2A] + S-adenosyl-L-homocysteine + H(+). Its function is as follows. S-adenosyl-L-methionine-dependent methyltransferase that has the ability to methylate both RNAs and proteins. Involved in pre-rRNA processing. Utilizes the methyl donor S-adenosyl-L-methionine to catalyze the site-specific 2'-hydroxyl methylation of ribose moieties in pre-ribosomal RNA. Site specificity is provided by a guide RNA that base pairs with the substrate. Methylation occurs at a characteristic distance from the sequence involved in base pairing with the guide RNA. Also acts as a protein methyltransferase by mediating methylation of 'Gln-105' of histone H2A (H2AQ105me), a modification that impairs binding of the FACT complex and is specifically present at 35S ribosomal DNA locus. In Giardia intestinalis (Giardia lamblia), this protein is rRNA 2'-O-methyltransferase fibrillarin.